A 325-amino-acid polypeptide reads, in one-letter code: Elongation factor P--(R)-beta-lysine ligase (325 aa).

A substrate-binding site is contributed by 76 to 78 (SPE). ATP-binding positions include 100–102 (RNE) and Asn109. Substrate is bound at residue Tyr118. Residue 244–245 (EL) coordinates ATP. Glu251 lines the substrate pocket. Gly300 provides a ligand contact to ATP.

Belongs to the class-II aminoacyl-tRNA synthetase family. EpmA subfamily. Homodimer.

The enzyme catalyses D-beta-lysine + L-lysyl-[protein] + ATP = N(6)-((3R)-3,6-diaminohexanoyl)-L-lysyl-[protein] + AMP + diphosphate + H(+). With EpmB is involved in the beta-lysylation step of the post-translational modification of translation elongation factor P (EF-P) on 'Lys-34'. Catalyzes the ATP-dependent activation of (R)-beta-lysine produced by EpmB, forming a lysyl-adenylate, from which the beta-lysyl moiety is then transferred to the epsilon-amino group of EF-P 'Lys-34'. This Salmonella choleraesuis (strain SC-B67) protein is Elongation factor P--(R)-beta-lysine ligase.